A 461-amino-acid chain; its full sequence is Argininosuccinate lyase (461 aa).

The protein belongs to the lyase 1 family. Argininosuccinate lyase subfamily.

The protein localises to the cytoplasm. It catalyses the reaction 2-(N(omega)-L-arginino)succinate = fumarate + L-arginine. Its pathway is amino-acid biosynthesis; L-arginine biosynthesis; L-arginine from L-ornithine and carbamoyl phosphate: step 3/3. This chain is Argininosuccinate lyase, found in Bacillus subtilis (strain 168).